The primary structure comprises 506 residues: Lysine--tRNA ligase (506 aa).

The Mg(2+) site is built by Glu-416 and Glu-423.

It belongs to the class-II aminoacyl-tRNA synthetase family. Homodimer. The cofactor is Mg(2+).

The protein localises to the cytoplasm. It carries out the reaction tRNA(Lys) + L-lysine + ATP = L-lysyl-tRNA(Lys) + AMP + diphosphate. The sequence is that of Lysine--tRNA ligase (lysS) from Xylella fastidiosa (strain 9a5c).